We begin with the raw amino-acid sequence, 229 residues long: Adenylate kinase (229 aa).

Position 10 to 15 (10 to 15 (GSGKGT)) interacts with ATP. Residues 30 to 59 (ESGVIFREHISKGTELGKQAKSYIDKGELV) form an NMP region. Residues Ser31, Arg36, 57–59 (ELV), 84–87 (GFPR), and Gln91 each bind AMP. An LID region spans residues 125-164 (GRRICKTNNNHPNNVSIDSIKPDGNNCRVCHGELIVRTDD). An ATP-binding site is contributed by Arg126. Residues Arg161 and Arg173 each coordinate AMP. Asn209 contributes to the ATP binding site.

This sequence belongs to the adenylate kinase family. As to quaternary structure, monomer.

It localises to the cytoplasm. It carries out the reaction AMP + ATP = 2 ADP. It participates in purine metabolism; AMP biosynthesis via salvage pathway; AMP from ADP: step 1/1. Catalyzes the reversible transfer of the terminal phosphate group between ATP and AMP. Plays an important role in cellular energy homeostasis and in adenine nucleotide metabolism. This is Adenylate kinase from Lawsonia intracellularis (strain PHE/MN1-00).